Reading from the N-terminus, the 1176-residue chain is Pesticidal crystal protein Cry1Aa (1176 aa).

This sequence belongs to the delta endotoxin family.

Promotes colloidosmotic lysis by binding to the midgut epithelial cells of many lepidopteran larvae. The chain is Pesticidal crystal protein Cry1Aa (cry1Aa) from Bacillus thuringiensis subsp. entomocidus.